The primary structure comprises 441 residues: Glutamyl-tRNA reductase (441 aa).

Substrate-binding positions include Thr49–Arg52, Ser110, Glu115–Gln117, and Gln121. Residue Cys50 is the Nucleophile of the active site. Gly190–Ala195 contacts NADP(+).

Belongs to the glutamyl-tRNA reductase family. As to quaternary structure, homodimer.

The enzyme catalyses (S)-4-amino-5-oxopentanoate + tRNA(Glu) + NADP(+) = L-glutamyl-tRNA(Glu) + NADPH + H(+). It participates in porphyrin-containing compound metabolism; protoporphyrin-IX biosynthesis; 5-aminolevulinate from L-glutamyl-tRNA(Glu): step 1/2. Functionally, catalyzes the NADPH-dependent reduction of glutamyl-tRNA(Glu) to glutamate 1-semialdehyde (GSA). This Sulfurihydrogenibium sp. (strain YO3AOP1) protein is Glutamyl-tRNA reductase.